The following is a 165-amino-acid chain: Nucleotide-binding protein TGRD_519 (165 aa).

The protein belongs to the YajQ family.

In terms of biological role, nucleotide-binding protein. The polypeptide is Nucleotide-binding protein TGRD_519 (Endomicrobium trichonymphae).